Here is a 320-residue protein sequence, read N- to C-terminus: Transaldolase (320 aa).

The active-site Schiff-base intermediate with substrate is lysine 126.

This sequence belongs to the transaldolase family. Type 1 subfamily. Homodimer.

Its subcellular location is the cytoplasm. It catalyses the reaction D-sedoheptulose 7-phosphate + D-glyceraldehyde 3-phosphate = D-erythrose 4-phosphate + beta-D-fructose 6-phosphate. The protein operates within carbohydrate degradation; pentose phosphate pathway; D-glyceraldehyde 3-phosphate and beta-D-fructose 6-phosphate from D-ribose 5-phosphate and D-xylulose 5-phosphate (non-oxidative stage): step 2/3. Its function is as follows. Transaldolase is important for the balance of metabolites in the pentose-phosphate pathway. The polypeptide is Transaldolase (Bordetella bronchiseptica (strain ATCC BAA-588 / NCTC 13252 / RB50) (Alcaligenes bronchisepticus)).